The chain runs to 84 residues: Limulin (84 aa).

The Pentraxin (PTX) domain occupies 6 to 84 (ITSKVKFPPS…DEQGDFLFNV (79 aa)). Positions 67 and 68 each coordinate Ca(2+).

It belongs to the pentraxin family. In terms of assembly, homopentamer. Pentraxin (or pentaxin) have a discoid arrangement of 5 non-covalently bound subunits. Ca(2+) is required as a cofactor. In terms of processing, a disulfide bond links Cys-38 to a Cys in the C-terminal half of the chain of 163 residues.

In terms of biological role, lectin that binds sialic acid. Displays antiviral activity and therefore may contribute to defense against infections. The protein is Limulin of Limulus polyphemus (Atlantic horseshoe crab).